The following is a 269-amino-acid chain: Phosphate import ATP-binding protein PstB (269 aa).

Residues 21–264 (IEIKDFNFFY…PKDRRTENYI (244 aa)) form the ABC transporter domain. Residue 55 to 62 (GPSGCGKT) participates in ATP binding.

The protein belongs to the ABC transporter superfamily. Phosphate importer (TC 3.A.1.7) family. As to quaternary structure, the complex is composed of two ATP-binding proteins (PstB), two transmembrane proteins (PstC and PstA) and a solute-binding protein (PstS).

The protein resides in the cell membrane. The catalysed reaction is phosphate(out) + ATP + H2O = ADP + 2 phosphate(in) + H(+). Part of the ABC transporter complex PstSACB involved in phosphate import. Responsible for energy coupling to the transport system. This chain is Phosphate import ATP-binding protein PstB, found in Mycoplasma capricolum subsp. capricolum (strain California kid / ATCC 27343 / NCTC 10154).